A 293-amino-acid chain; its full sequence is 4-hydroxy-tetrahydrodipicolinate synthase (293 aa).

Residue threonine 45 participates in pyruvate binding. Catalysis depends on tyrosine 133, which acts as the Proton donor/acceptor. Residue lysine 161 is the Schiff-base intermediate with substrate of the active site. Isoleucine 204 contacts pyruvate.

The protein belongs to the DapA family. In terms of assembly, homotetramer; dimer of dimers.

The protein localises to the cytoplasm. It carries out the reaction L-aspartate 4-semialdehyde + pyruvate = (2S,4S)-4-hydroxy-2,3,4,5-tetrahydrodipicolinate + H2O + H(+). Its pathway is amino-acid biosynthesis; L-lysine biosynthesis via DAP pathway; (S)-tetrahydrodipicolinate from L-aspartate: step 3/4. Catalyzes the condensation of (S)-aspartate-beta-semialdehyde [(S)-ASA] and pyruvate to 4-hydroxy-tetrahydrodipicolinate (HTPA). This Yersinia pseudotuberculosis serotype I (strain IP32953) protein is 4-hydroxy-tetrahydrodipicolinate synthase.